We begin with the raw amino-acid sequence, 426 residues long: Adenylosuccinate synthetase (426 aa).

Residues 14 to 20 (GDEGKGK) and 42 to 44 (GHT) contribute to the GTP site. Catalysis depends on D15, which acts as the Proton acceptor. Mg(2+) is bound by residues D15 and G42. Residues 15–18 (DEGK), 40–43 (NAGH), T130, R144, Q224, T239, and R303 each bind IMP. H43 functions as the Proton donor in the catalytic mechanism. 299 to 305 (TVTKRPR) contacts substrate. GTP contacts are provided by residues R305, 331-333 (LID), and 413-415 (SVG).

Belongs to the adenylosuccinate synthetase family. As to quaternary structure, homodimer. Requires Mg(2+) as cofactor.

It localises to the cytoplasm. It catalyses the reaction IMP + L-aspartate + GTP = N(6)-(1,2-dicarboxyethyl)-AMP + GDP + phosphate + 2 H(+). Its pathway is purine metabolism; AMP biosynthesis via de novo pathway; AMP from IMP: step 1/2. In terms of biological role, plays an important role in the de novo pathway of purine nucleotide biosynthesis. Catalyzes the first committed step in the biosynthesis of AMP from IMP. In Malacoplasma penetrans (strain HF-2) (Mycoplasma penetrans), this protein is Adenylosuccinate synthetase.